The sequence spans 506 residues: Ubiquitin carboxyl-terminal hydrolase 22 (506 aa).

Residues 4 to 121 (AGCSHVNGFK…KEEQRKAWKL (118 aa)) form a UBP-type zinc finger. Zn(2+)-binding residues include Cys6, His8, Cys46, Cys49, Cys59, Cys62, Cys67, His72, His76, His82, Cys95, and Cys98. The USP domain maps to 159-501 (RGLINLGNTC…EGYLLFYHKQ (343 aa)). Cys168 (nucleophile) is an active-site residue. Residue His460 is the Proton acceptor of the active site.

This sequence belongs to the peptidase C19 family. UBP8 subfamily. In terms of assembly, component of some SAGA transcription coactivator-HAT complexes.

The protein resides in the nucleus. The catalysed reaction is Thiol-dependent hydrolysis of ester, thioester, amide, peptide and isopeptide bonds formed by the C-terminal Gly of ubiquitin (a 76-residue protein attached to proteins as an intracellular targeting signal).. Histone deubiquitinating component of the transcription regulatory histone acetylation (HAT) complex SAGA. Catalyzes the deubiquitination of both histones H2A and H2B, thereby acting as a coactivator. Recruited to specific gene promoters by activators, where it is required for transcription. The chain is Ubiquitin carboxyl-terminal hydrolase 22 (usp22) from Danio rerio (Zebrafish).